The primary structure comprises 151 residues: UPF0208 membrane protein YE1335 (151 aa).

A run of 2 helical transmembrane segments spans residues 46-66 and 69-89; these read FGIRFMPPLAIFTLTWQIALG and LGPAIATALFACGLPLQGLWW.

It belongs to the UPF0208 family.

It is found in the cell inner membrane. This is UPF0208 membrane protein YE1335 from Yersinia enterocolitica serotype O:8 / biotype 1B (strain NCTC 13174 / 8081).